The chain runs to 38 residues: RapG inhibitor (38 aa).

Residues 1-33 constitute a propeptide that is removed on maturation; sequence MKRFLIGAGVAAVILSGWFIADHQTHSQEMKVA.

Belongs to the Phr family. Post-translationally, contains a predicted signal peptide cleavage site in the N-terminal region, however the propeptide is probably subject to only one processing event, at the N-terminal end of the mature peptide.

Its subcellular location is the secreted. The protein localises to the cytoplasm. Signaling molecule involved in the regulation of expression of DegU-controlled genes. Secreted during production, but the mature peptide acts intracellularly, indicating that it needs to be imported into the cell to function. Stimulates the DegU-dependent expression of aprE, an extracellular alkaline protease. Acts by inhibiting RapG activity. At high concentrations, represses the DegS-dependent aprE expression. In Bacillus subtilis (strain 168), this protein is RapG inhibitor (phrG).